Here is a 91-residue protein sequence, read N- to C-terminus: Elongation factor 1-beta (91 aa).

This sequence belongs to the EF-1-beta/EF-1-delta family.

Promotes the exchange of GDP for GTP in EF-1-alpha/GDP, thus allowing the regeneration of EF-1-alpha/GTP that could then be used to form the ternary complex EF-1-alpha/GTP/AAtRNA. This Thermococcus onnurineus (strain NA1) protein is Elongation factor 1-beta.